The primary structure comprises 94 residues: ESAT-6-like protein EsxL (94 aa).

This sequence belongs to the WXG100 family. ESAT-6 subfamily. Strongly interacts with EsxK to form a heterodimeric complex under reducing conditions.

It is found in the secreted. The polypeptide is ESAT-6-like protein EsxL (Mycobacterium bovis (strain ATCC BAA-935 / AF2122/97)).